The primary structure comprises 81 residues: Delta-actitoxin-Aeq2d (81 aa).

The first 19 residues, 1–19 (MNRLMILVFAAVILALASA), serve as a signal peptide directing secretion. Positions 20–25 (DDVDIA) are excised as a propeptide. 3 disulfide bridges follow: C31–C78, C33–C68, and C61–C79.

Belongs to the sea anemone sodium channel inhibitory toxin family. Type I subfamily.

It localises to the secreted. It is found in the nematocyst. Functionally, binds specifically to voltage-gated sodium channels (Nav), thereby delaying their inactivation during signal transduction. Causes death to crabs. This Actinia equina (Beadlet anemone) protein is Delta-actitoxin-Aeq2d.